Reading from the N-terminus, the 86-residue chain is Small ribosomal subunit protein bS18c (86 aa).

This sequence belongs to the bacterial ribosomal protein bS18 family. In terms of assembly, part of the 30S ribosomal subunit.

The protein resides in the plastid. It localises to the chloroplast. The polypeptide is Small ribosomal subunit protein bS18c (Larix laricina (Tamarack)).